Here is a 304-residue protein sequence, read N- to C-terminus: Type II restriction enzyme LlaDCHI (304 aa).

It belongs to the DpnII type II restriction endonuclease family.

It catalyses the reaction Endonucleolytic cleavage of DNA to give specific double-stranded fragments with terminal 5'-phosphates.. Its function is as follows. A P subtype restriction enzyme that recognizes the double-stranded unmethylated sequence 5'-GATC-3' and cleaves before G-1. The protein is Type II restriction enzyme LlaDCHI (llaDCHIR) of Lactococcus lactis subsp. cremoris (Streptococcus cremoris).